Here is a 499-residue protein sequence, read N- to C-terminus: MKMLNPQKPRLERRIAGSTNRWRFPRQPFSGDLLGLSQMCKAANIDFDEVLKNPDRLCISQIQKIFPENLKNKTIQSREADVILECLGFKWELHQPQLFQSETLAKLYLMGLARGNANPEKESVKILQAQQPGRSREQRPVKINDPLVTREAFATALKNLYMQEVKICLDDVLGVLAAAHILQFGSLFQRCVTVMMSGLTPSTIKNFYLAGCKYKEEPLTTACEKWMEMNLVPLVGTQIHLRKIPKELLHKVLKSPRLFTFSEFDLLKTLLLWVYLQLNNKTQTFPMYQTVLMFFSSFPKNCAFLDRDVGQNLIPLFLCLRLHSITKGKDLEELRHINFFPESWLVRVTANHYHALENGGDMAHVKDLSTQAVRFGRLFNQEYTTHSKVITLYGFFFEIKGIKHDTTSYSFHMQRIRHTDLECASTVYENTPISLRAERLVTYEIRAQTTVDGKWQEFRTNQITQKFGLAEPSCKSHALKIQTVGIPIYASFSFVFSLS.

Positions 143-199 (INDPLVTREAFATALKNLYMQEVKICLDDVLGVLAAAHILQFGSLFQRCVTVMMSGL) constitute a BTB domain.

The protein is BTB/POZ domain-containing protein 16 (BTBD16) of Bos taurus (Bovine).